The chain runs to 272 residues: Cyclase-like protein 2 (272 aa).

Residues 1 to 24 (MAVPPLFFLLTLLSLPSLLISAGA) form the signal peptide.

This sequence belongs to the Cyclase 1 superfamily.

It is found in the secreted. The protein resides in the extracellular space. The protein localises to the extracellular matrix. Functionally, may function redundantly with CYCLASE1 for normal plant growth, development and viability. The protein is Cyclase-like protein 2 of Arabidopsis thaliana (Mouse-ear cress).